The chain runs to 513 residues: 2-isopropylmalate synthase (513 aa).

Positions 7–269 (VYIFDTTLRD…TTGIVTEELF (263 aa)) constitute a Pyruvate carboxyltransferase domain. D16, H204, H206, and N240 together coordinate Mn(2+). The tract at residues 393-513 (ALQFLSVHCG…KEEERTCPQL (121 aa)) is regulatory domain.

This sequence belongs to the alpha-IPM synthase/homocitrate synthase family. LeuA type 1 subfamily. As to quaternary structure, homodimer. The cofactor is Mn(2+).

Its subcellular location is the cytoplasm. The catalysed reaction is 3-methyl-2-oxobutanoate + acetyl-CoA + H2O = (2S)-2-isopropylmalate + CoA + H(+). It functions in the pathway amino-acid biosynthesis; L-leucine biosynthesis; L-leucine from 3-methyl-2-oxobutanoate: step 1/4. Catalyzes the condensation of the acetyl group of acetyl-CoA with 3-methyl-2-oxobutanoate (2-ketoisovalerate) to form 3-carboxy-3-hydroxy-4-methylpentanoate (2-isopropylmalate). The polypeptide is 2-isopropylmalate synthase (Solidesulfovibrio magneticus (strain ATCC 700980 / DSM 13731 / RS-1) (Desulfovibrio magneticus)).